The primary structure comprises 262 residues: Indole-3-glycerol phosphate synthase (262 aa).

Belongs to the TrpC family.

The enzyme catalyses 1-(2-carboxyphenylamino)-1-deoxy-D-ribulose 5-phosphate + H(+) = (1S,2R)-1-C-(indol-3-yl)glycerol 3-phosphate + CO2 + H2O. The protein operates within amino-acid biosynthesis; L-tryptophan biosynthesis; L-tryptophan from chorismate: step 4/5. In Leptothrix cholodnii (strain ATCC 51168 / LMG 8142 / SP-6) (Leptothrix discophora (strain SP-6)), this protein is Indole-3-glycerol phosphate synthase.